The chain runs to 80 residues: Exodeoxyribonuclease 7 small subunit (80 aa).

It belongs to the XseB family. In terms of assembly, heterooligomer composed of large and small subunits.

It localises to the cytoplasm. The enzyme catalyses Exonucleolytic cleavage in either 5'- to 3'- or 3'- to 5'-direction to yield nucleoside 5'-phosphates.. Its function is as follows. Bidirectionally degrades single-stranded DNA into large acid-insoluble oligonucleotides, which are then degraded further into small acid-soluble oligonucleotides. The chain is Exodeoxyribonuclease 7 small subunit from Vibrio atlanticus (strain LGP32) (Vibrio splendidus (strain Mel32)).